The following is a 523-amino-acid chain: MPSVMEKPSAGSGILSRSRAKTAPNGGQPHSEDDSSEEEHSHDSMIRVGTNYQAVIPECKPESPARYSNKELKGMLVWSPNHCVSDAKLDKYIAMAKEKHGYNIEQALGMLLWHKHDVEKSLADLANFTPFPDEWTVEDKVLFEQAFGFHGKCFQRIQQMLPDKVIPSLVKYYYSWKKTRSRTSVMDRQARRLGGRKDKEDSDELEEGRGAVSEGEPDTGDPKREPLPSRPLNARPGPGKKEVQISQYRHHPLRTRRRPPKGMYLSPEGLTAVSGSPDLANLTLRGLDSQLISLKRQVQSMKQTNSSLRQALEGGIDPLRPPEANTKFNSRWTTDEQLLAVQAIRRYGKDFGAIAEVIGNKTLTQVKTFFVSYRRRFNLEEVLQEWEAEQDGAPAAPVPTEEARRGAPVPATALEEDDEVQITSVSTSVPRSVPPAPPPPPPPTSLSQPPPLLRPPLPTAPTLLRQPPPLQQGRFLQPRLAPNQPPPPLIRPALAASRHSARPGPQPPPTLVGAPLEPPAPSL.

The tract at residues 1–43 is disordered; the sequence is MPSVMEKPSAGSGILSRSRAKTAPNGGQPHSEDDSSEEEHSHD. Over residues 30–43 the composition is skewed to basic and acidic residues; that stretch reads HSEDDSSEEEHSHD. 4 positions are modified to phosphoserine: serine 31, serine 35, serine 36, and serine 63. The ELM2 domain occupies 44–129; sequence SMIRVGTNYQ…KSLADLANFT (86 aa). Lysine 88 participates in a covalent cross-link: Glycyl lysine isopeptide (Lys-Gly) (interchain with G-Cter in SUMO2). Positions 130 to 181 constitute an SANT 1 domain; sequence PFPDEWTVEDKVLFEQAFGFHGKCFQRIQQMLPDKVIPSLVKYYYSWKKTRS. The disordered stretch occupies residues 185–244; that stretch reads VMDRQARRLGGRKDKEDSDELEEGRGAVSEGEPDTGDPKREPLPSRPLNARPGPGKKEVQ. A Phosphoserine modification is found at serine 202. Residues 283–314 adopt a coiled-coil conformation; it reads TLRGLDSQLISLKRQVQSMKQTNSSLRQALEG. Positions 327 to 378 constitute an SANT 2 domain; the sequence is KFNSRWTTDEQLLAVQAIRRYGKDFGAIAEVIGNKTLTQVKTFFVSYRRRFN. The tract at residues 387–523 is disordered; sequence EAEQDGAPAA…APLEPPAPSL (137 aa). The span at 432-459 shows a compositional bias: pro residues; it reads SVPPAPPPPPPPTSLSQPPPLLRPPLPT. Low complexity predominate over residues 460–482; it reads APTLLRQPPPLQQGRFLQPRLAP. Position 479 is an asymmetric dimethylarginine (arginine 479). The span at 504-523 shows a compositional bias: pro residues; the sequence is GPQPPPTLVGAPLEPPAPSL.

The protein belongs to the CoREST family. Predominantly, but not exclusively, expressed in neural tissue. Strongly expressed in neural domains of the developing brain of the developing mouse CNS.

The protein resides in the nucleus. In terms of biological role, may act as a component of a corepressor complex that represses transcription. The chain is REST corepressor 2 (Rcor2) from Mus musculus (Mouse).